A 531-amino-acid chain; its full sequence is Protein RPN4 (531 aa).

A disordered region spans residues 338-432 (RFPSPSTSAN…PSAHTSSSDG (95 aa)). Polar residues predominate over residues 341–354 (SPSTSANVPSTATT). The segment covering 362–375 (SSSNRSCVSNSNEN) has biased composition (low complexity). A Nuclear localization signal motif is present at residues 382 to 398 (KKPTSAVVSSNASRRKL). A compositionally biased stretch (basic residues) spans 394 to 407 (SRRKLINYTKKHLS). The segment covering 408 to 430 (SHSSTNSNSKPSTASPSAHTSSS) has biased composition (low complexity).

Probably interacts with SEC63. Interacts with MUB1, UBR2 and RPN2. In terms of processing, ubiquitinated by UBR2 in the presence of UBC2; which leads to proteasomal degradation.

It localises to the nucleus. Its function is as follows. Acts as a transcriptional activator of a number of genes encoding proteasomal subunits. Binds to a PACE (proteasome-associated control element) DNA sequence 5'-GGTGGCAAA-3'. Its expression is in turn regulated by the 26S proteasome, thereby providing a negative feedback control mechanism. Required for normal growth at low temperatures. This chain is Protein RPN4 (RPN4), found in Saccharomyces cerevisiae (strain ATCC 204508 / S288c) (Baker's yeast).